Reading from the N-terminus, the 415-residue chain is MKVLGLIVEYNPFHNGHLYHLEESKKISGADFVVCVMSGNFIQRGEPAIVNKWARTKMALSAGADLVIELPLSCAMASAEYFASGAVRILNDIGIVDYICFGSEHGDVKTLDYIAQILVEEPESYKSFLKEELDNGLSYPAARESALKKYTAHSINIPQIISSSNNILGIEYLKALRRIKSSIIPLTIKRINNDYNTENITGSISSASSIRKYISTSNSTSFDDVLAMTMPKTSVDILFEEFSAGRGPVFKEDFYPVVTSLIRKMTPEQIRNFAYVSEGLENRIKSAADTAGTYEELVESICTRRYTKTRVQRILMGILMGVTSKDLDMLSRFDSPQYARILGFNSKGKQLLSQIKKKSSIPLVLKLSDFIKSCDPVLKRKLELEILATDLYVMCYKNPAFRKAGQEFTQNIIIM.

Residues 7–20, Gly102, Asn165, and 190–191 contribute to the ATP site; these read IVEYNPFHNGHLYH and RI.

This sequence belongs to the TmcAL family.

The protein localises to the cytoplasm. It carries out the reaction cytidine(34) in elongator tRNA(Met) + acetate + ATP = N(4)-acetylcytidine(34) in elongator tRNA(Met) + AMP + diphosphate. Functionally, catalyzes the formation of N(4)-acetylcytidine (ac(4)C) at the wobble position of elongator tRNA(Met), using acetate and ATP as substrates. First activates an acetate ion to form acetyladenylate (Ac-AMP) and then transfers the acetyl group to tRNA to form ac(4)C34. The polypeptide is tRNA(Met) cytidine acetate ligase (Acetivibrio thermocellus (strain ATCC 27405 / DSM 1237 / JCM 9322 / NBRC 103400 / NCIMB 10682 / NRRL B-4536 / VPI 7372) (Clostridium thermocellum)).